We begin with the raw amino-acid sequence, 177 residues long: Nucleoside triphosphate/diphosphate phosphatase (177 aa).

The active-site Proton donor is R23. Mg(2+)-binding residues include N87, D103, D105, D107, D120, and E123.

Belongs to the Ntdp family. Mg(2+) is required as a cofactor.

It carries out the reaction a ribonucleoside 5'-triphosphate + H2O = a ribonucleoside 5'-diphosphate + phosphate + H(+). The catalysed reaction is a ribonucleoside 5'-diphosphate + H2O = a ribonucleoside 5'-phosphate + phosphate + H(+). Functionally, has nucleoside phosphatase activity towards nucleoside triphosphates and nucleoside diphosphates. The sequence is that of Nucleoside triphosphate/diphosphate phosphatase from Streptococcus pyogenes serotype M3 (strain ATCC BAA-595 / MGAS315).